The primary structure comprises 266 residues: Norfluorocurarine synthase 2 (266 aa).

The 111-residue stretch at 11-121 (HFVLVHGAGH…VMPDSTHPPN (111 aa)) folds into the AB hydrolase-1 domain. Active-site residues include S86, D216, and H244.

This sequence belongs to the AB hydrolase superfamily. As to quaternary structure, homodimer.

It catalyses the reaction 17-dehydropreakuammicine + H2O = norfluorocurarine + methanol + CO2. Its pathway is alkaloid biosynthesis. Hydrolase involved in the biosynthesis of curare monoterpene indole alkaloids (MIAs), natural products such as diaboline, a pharmacologically active compound used to regulate blood pressure. Curare alkaloids act as animal glycine receptor antagonists. Catalyzes the conversion of dehydropreakuammicine to norfluorocurarine. The chain is Norfluorocurarine synthase 2 from Strychnos sp.